A 141-amino-acid polypeptide reads, in one-letter code: Hemoglobin D subunit alpha (141 aa).

The Globin domain maps to 1 to 141 (MLTEDDKQLI…VSAVLAEKYR (141 aa)). His-58 lines the O2 pocket. A heme b-binding site is contributed by His-87.

It belongs to the globin family. As to quaternary structure, tetramer of two alpha chains and two beta chains. Red blood cells.

Functionally, involved in oxygen transport from the lung to the various peripheral tissues. The protein is Hemoglobin D subunit alpha of Aldabrachelys gigantea (Aldabra giant tortoise).